Consider the following 282-residue polypeptide: Succinate dehydrogenase [ubiquinone] iron-sulfur subunit, mitochondrial (282 aa).

The transit peptide at 1–21 directs the protein to the mitochondrion; the sequence is MLRGSTSVCRSLELVTQAARY. A 2Fe-2S ferredoxin-type domain is found at 39-129; sequence EIYRFNPEEP…TTKIYPLPHM (91 aa). [2Fe-2S] cluster is bound by residues C89, C94, C97, and C109. Residues 172–202 form the 4Fe-4S ferredoxin-type domain; it reads EQEKLDGLYECILCACCSASCPSYWWNADKY. [4Fe-4S] cluster is bound by residues C182, C185, and C188. Residue C192 coordinates [3Fe-4S] cluster. An a rhodoquinol-binding site is contributed by W197. W197 contacts a ubiquinone. Residues C239 and C245 each coordinate [3Fe-4S] cluster. C249 provides a ligand contact to [4Fe-4S] cluster.

It belongs to the succinate dehydrogenase/fumarate reductase iron-sulfur protein family. As to quaternary structure, component of the mitochondrial electron transport chain complex II composed of four subunits: a flavoprotein (Fp), an iron-sulfur protein (Ip), and a large cytochrome b (CybL) subunit and a small cytochrome b (CybS) subunit. There are 2 developmental stage-specific forms of complex II which have the Ip and CybL subunits in common. Complex II from the free-living larvae (aerobic environment) acts as a succinate dehydrogenase and is composed of the common subunit Ip and CybL and the stage specific subunits FpL and CybSL. Complex II from parasitic larvae and adults (anaerobic environment) acts as a fumarate reductase and is composed of the common subunit Ip and CybL and the stage specific subunits FpA and CybSA. It depends on [2Fe-2S] cluster as a cofactor. [3Fe-4S] cluster is required as a cofactor. Requires [4Fe-4S] cluster as cofactor. As to expression, expressed in adult muscles (at protein level).

Its subcellular location is the mitochondrion inner membrane. It carries out the reaction a ubiquinone + succinate = a ubiquinol + fumarate. The catalysed reaction is a rhodoquinone + succinate = a rhodoquinol + fumarate. It functions in the pathway carbohydrate metabolism; tricarboxylic acid cycle; fumarate from succinate (eukaryal route): step 1/1. Its activity is regulated as follows. Inhibited by the fungicide flutolanil. In terms of biological role, iron-sulfur protein (Ip) subunit of the mitochondrial electron transport chain complex II which, together with the flavoprotein (Fp) subunit forms the catalytic core of the complex. During the free-living egg-larvae stages, which occur in an aerobic environment, complex II acts as a succinate dehydrogenase by transferring electrons from succinate to ubiquinone. During the parasitic larvae and adult stages, which occur in an anaerobic environment, complex II acts as a fumarate reductase by transferring electrons from rhodoquinol to fumarate. The polypeptide is Succinate dehydrogenase [ubiquinone] iron-sulfur subunit, mitochondrial (Ascaris suum (Pig roundworm)).